The sequence spans 444 residues: Tubulin beta-4A chain (444 aa).

Residues 1-4 (MREI) carry the MREI motif motif. Positions 11, 69, 138, 142, 143, and 144 each coordinate GTP. Glu69 is a binding site for Mg(2+). Phosphoserine; by CDK1 is present on Ser172. Residues Asn204 and Asn226 each contribute to the GTP site. Glu436 carries the 5-glutamyl polyglutamate modification.

Belongs to the tubulin family. Dimer of alpha and beta chains. A typical microtubule is a hollow water-filled tube with an outer diameter of 25 nm and an inner diameter of 15 nM. Alpha-beta heterodimers associate head-to-tail to form protofilaments running lengthwise along the microtubule wall with the beta-tubulin subunit facing the microtubule plus end conferring a structural polarity. Microtubules usually have 13 protofilaments but different protofilament numbers can be found in some organisms and specialized cells. It depends on Mg(2+) as a cofactor. In terms of processing, some glutamate residues at the C-terminus are polyglycylated, resulting in polyglycine chains on the gamma-carboxyl group. Glycylation is mainly limited to tubulin incorporated into axonemes (cilia and flagella) whereas glutamylation is prevalent in neuronal cells, centrioles, axonemes, and the mitotic spindle. Both modifications can coexist on the same protein on adjacent residues, and lowering polyglycylation levels increases polyglutamylation, and reciprocally. Cilia and flagella glycylation is required for their stability and maintenance. Flagella glycylation controls sperm motility. Some glutamate residues at the C-terminus are polyglutamylated, resulting in polyglutamate chains on the gamma-carboxyl group. Polyglutamylation plays a key role in microtubule severing by spastin (SPAST). SPAST preferentially recognizes and acts on microtubules decorated with short polyglutamate tails: severing activity by SPAST increases as the number of glutamates per tubulin rises from one to eight, but decreases beyond this glutamylation threshold. Glutamylation is also involved in cilia motility. Post-translationally, phosphorylated on Ser-172 by CDK1 during the cell cycle, from metaphase to telophase, but not in interphase. This phosphorylation inhibits tubulin incorporation into microtubules.

The protein localises to the cytoplasm. It is found in the cytoskeleton. Its function is as follows. Tubulin is the major constituent of microtubules, a cylinder consisting of laterally associated linear protofilaments composed of alpha- and beta-tubulin heterodimers. Microtubules grow by the addition of GTP-tubulin dimers to the microtubule end, where a stabilizing cap forms. Below the cap, tubulin dimers are in GDP-bound state, owing to GTPase activity of alpha-tubulin. This chain is Tubulin beta-4A chain (TUBB4A), found in Bos taurus (Bovine).